A 416-amino-acid polypeptide reads, in one-letter code: RNA polymerase sigma factor SigA (416 aa).

A sigma-70 factor domain-2 region spans residues 184–254 (MVQSNLRLVV…TRAIADQSRT (71 aa)). The Interaction with polymerase core subunit RpoC signature appears at 208 to 211 (DLIQ). A sigma-70 factor domain-3 region spans residues 263–338 (ETISRIKKTT…EADGETPEDE (76 aa)). Residues 351–404 (VLDTLSPRERDVLRLRYGLDDGRMKTLEEIGQIFNVTRERIRQIEAKALRKLRH) are sigma-70 factor domain-4. The H-T-H motif DNA-binding region spans 377–396 (LEEIGQIFNVTRERIRQIEA).

It belongs to the sigma-70 factor family. RpoD/SigA subfamily. In terms of assembly, interacts transiently with the RNA polymerase catalytic core.

The protein resides in the cytoplasm. Sigma factors are initiation factors that promote the attachment of RNA polymerase to specific initiation sites and are then released. This sigma factor is the primary sigma factor during exponential growth. This chain is RNA polymerase sigma factor SigA, found in Microcystis aeruginosa.